The chain runs to 613 residues: Zinc finger protein 665 (613 aa).

18 C2H2-type zinc fingers span residues 113–135, 141–163, 169–191, 197–219, 225–247, 253–275, 281–303, 309–331, 337–359, 365–387, 393–415, 421–443, 449–471, 477–499, 505–527, 533–555, 561–583, and 589–611; these read YKCDECGKVFNQNSRLTSHKRIH, YRCNECGKAFTVRSNLTIHQVIH, YKCNECGKVFSQPSNLAGHQRIH, YKCNECGKAFRAHSKLTTHQVIH, YKCNECGKCFTQNSHLASHRRIH, YKCNECGKAFSVRSSLTTHQTIH, YKCNECGKVFRHNSYLTKHRRVH, YKCNECGKAFSMHSNLTKHQIIH, FKCNECVKVFTQYSHLANHRRIH, YRCDECGKAFSVRSSLTTHQAIH, YKCNDCGKVFTQNSHLASHRGIH, YKCDECGKAFSQTSQLARHWRVH, YKCNECGKAFSVHSSLTTHQTIH, YKCNDCGKVFRHNSYLAVHQRIH, YKCNECGKAFSVHSNLATHQVIH, YKCNECGKVFTQNSHLANHRRIH, YRCNECGKAFSVRSTLTTHMAIH, and YKCNECGKVFTQNSNLAKHRRIH.

It belongs to the krueppel C2H2-type zinc-finger protein family.

Its subcellular location is the nucleus. In terms of biological role, may be involved in transcriptional regulation. This is Zinc finger protein 665 (ZNF665) from Pongo abelii (Sumatran orangutan).